A 215-amino-acid polypeptide reads, in one-letter code: MKKPALKYCGIRSLKDLQLAAESQADYLGFIFAESKRKVSPEDVKKWLNQVRVEKQVAGVFVNESIETMSRIAKSLKLDVIQLHGDEKPADAAALRKLTGCEIWKALHHQDNTTQEIARFKDNVDGFVIDSSVKGSRGGTGVAFSWECVPEYQQAAIGKRCFIAGGVNPDSITRLLKWQPEGIDLASGIEKNGQKDQNLMRLLEERMNRYVSISE.

It belongs to the TrpF family.

It carries out the reaction N-(5-phospho-beta-D-ribosyl)anthranilate = 1-(2-carboxyphenylamino)-1-deoxy-D-ribulose 5-phosphate. The protein operates within amino-acid biosynthesis; L-tryptophan biosynthesis; L-tryptophan from chorismate: step 3/5. This Bacillus subtilis (strain 168) protein is N-(5'-phosphoribosyl)anthranilate isomerase (trpF).